The following is a 358-amino-acid chain: Microbial Terpene synthase-like protein 13 (358 aa).

This sequence belongs to the terpene synthase family.

Its function is as follows. No terpene synthase activity detected in vitro. The polypeptide is Microbial Terpene synthase-like protein 13 (Selaginella moellendorffii (Spikemoss)).